The primary structure comprises 492 residues: NADH-ubiquinone oxidoreductase chain 4 (492 aa).

15 helical membrane passes run 9–29, 36–56, 63–83, 86–106, 115–135, 136–156, 170–190, 211–231, 242–262, 269–289, 304–324, 332–352, 370–390, 410–430, and 454–474; these read LILTSLTPLIGVFILLLIPSA, NFALWISCLTFLFSLLLWIQF, FQFSTTFLWFPFFNLYYTIGI, ISLFFILLTTLLIISCILVSW, DYLICFLILEFLLIQVFSVLD, LLLFYIYFESVLIPMFLIVGV, FFLYTLIGSLLMLLALLNIYF, IFLWLSFFASFAVKIPMIPFH, PTAGSVILAGILLKMGGYGFL, FPVASIFFTPFIFTLSLVAII, IIAYSSVSHMGFVTIGIFSLN, ILLMLSHGLVSSALFLCIGVL, VMPLFGVFFLFFTFANLGFPG, TLTLFASLGMIFGAAYSIWLF, and FWILIPLAILILWMGIYPNSF.

Belongs to the complex I subunit 4 family.

It is found in the mitochondrion membrane. It catalyses the reaction a ubiquinone + NADH + 5 H(+)(in) = a ubiquinol + NAD(+) + 4 H(+)(out). Its function is as follows. Core subunit of the mitochondrial membrane respiratory chain NADH dehydrogenase (Complex I) that is believed to belong to the minimal assembly required for catalysis. Complex I functions in the transfer of electrons from NADH to the respiratory chain. The immediate electron acceptor for the enzyme is believed to be ubiquinone. The protein is NADH-ubiquinone oxidoreductase chain 4 (ND4) of Chondrus crispus (Carrageen Irish moss).